The following is a 725-amino-acid chain: uncharacterized protein (725 aa).

One can recognise a FtsK domain in the interval 363 to 556 (GTYVEIPLYS…FVTTRPEDSC (194 aa)). 382-389 (GRTRGGKS) contributes to the ATP binding site.

This sequence belongs to the FtsK/SpoIIIE/SftA family.

Its function is as follows. Probable DNA motor protein. May track DNA in a ATP-dependent manner by generating positive supercoils in front of it and negative supercoils behind it. This is an uncharacterized protein from Nostoc sp. (strain PCC 7120 / SAG 25.82 / UTEX 2576).